Reading from the N-terminus, the 179-residue chain is Large ribosomal subunit protein uL6 (179 aa).

It belongs to the universal ribosomal protein uL6 family. Part of the 50S ribosomal subunit.

In terms of biological role, this protein binds to the 23S rRNA, and is important in its secondary structure. It is located near the subunit interface in the base of the L7/L12 stalk, and near the tRNA binding site of the peptidyltransferase center. The protein is Large ribosomal subunit protein uL6 of Finegoldia magna (strain ATCC 29328 / DSM 20472 / WAL 2508) (Peptostreptococcus magnus).